A 198-amino-acid chain; its full sequence is Holliday junction branch migration complex subunit RuvA (198 aa).

The tract at residues 1-63 (MYDYIKGQLT…EDAHLLFGFH (63 aa)) is domain I. A domain II region spans residues 64 to 142 (TEDEKDVFLK…EAPQETGHTK (79 aa)). Residues 143–147 (ARSNK) form a flexible linker region. Positions 148 to 198 (AGNTQLDEAIEALLALGYKAKELKKIRAFFEETSETAEQYIKSALKLLMKG) are domain III.

It belongs to the RuvA family. Homotetramer. Forms an RuvA(8)-RuvB(12)-Holliday junction (HJ) complex. HJ DNA is sandwiched between 2 RuvA tetramers; dsDNA enters through RuvA and exits via RuvB. An RuvB hexamer assembles on each DNA strand where it exits the tetramer. Each RuvB hexamer is contacted by two RuvA subunits (via domain III) on 2 adjacent RuvB subunits; this complex drives branch migration. In the full resolvosome a probable DNA-RuvA(4)-RuvB(12)-RuvC(2) complex forms which resolves the HJ.

The protein localises to the cytoplasm. Its function is as follows. The RuvA-RuvB-RuvC complex processes Holliday junction (HJ) DNA during genetic recombination and DNA repair, while the RuvA-RuvB complex plays an important role in the rescue of blocked DNA replication forks via replication fork reversal (RFR). RuvA specifically binds to HJ cruciform DNA, conferring on it an open structure. The RuvB hexamer acts as an ATP-dependent pump, pulling dsDNA into and through the RuvAB complex. HJ branch migration allows RuvC to scan DNA until it finds its consensus sequence, where it cleaves and resolves the cruciform DNA. The protein is Holliday junction branch migration complex subunit RuvA of Streptococcus pyogenes serotype M2 (strain MGAS10270).